A 39-amino-acid chain; its full sequence is Osmotin-like protein (39 aa).

The protein belongs to the thaumatin family. Post-translationally, contains intrachain disulfide bonds.

Its function is as follows. May be an important antifungal protein. This is Osmotin-like protein from Hevea brasiliensis (Para rubber tree).